Reading from the N-terminus, the 311-residue chain is Protease HtpX homolog 1 (311 aa).

2 helical membrane-spanning segments follow: residues valine 12 to leucine 32 and isoleucine 35 to serine 55. Residue histidine 137 participates in Zn(2+) binding. The active site involves glutamate 138. Histidine 141 is a binding site for Zn(2+). The next 2 membrane-spanning stretches (helical) occupy residues valine 159–alanine 179 and leucine 184–leucine 204. Glutamate 216 contacts Zn(2+).

It belongs to the peptidase M48B family. Zn(2+) is required as a cofactor.

Its subcellular location is the cell membrane. This Saccharolobus solfataricus (strain ATCC 35092 / DSM 1617 / JCM 11322 / P2) (Sulfolobus solfataricus) protein is Protease HtpX homolog 1.